The primary structure comprises 246 residues: Homeobox protein SIX6 (246 aa).

The segment at residues 128 to 187 (GEQKTHCFKERTRHLLREWYLQDPYPNPSKKRELAQATGLTPTQVGNWFKNRRQRDRAAA) is a DNA-binding region (homeobox). Residues 190–246 (NRLQQQVLSQGSGRALRAEGDGTPEVLGVATSPAASLSSKAATSAISITSSDSECDI) are disordered. The segment covering 191–201 (RLQQQVLSQGS) has biased composition (polar residues). Residue Thr-212 is modified to Phosphothreonine. Residues 219–246 (ATSPAASLSSKAATSAISITSSDSECDI) are compositionally biased toward low complexity. A phosphoserine mark is found at Ser-221, Ser-225, Ser-227, and Ser-228.

Belongs to the SIX/Sine oculis homeobox family. Interacts with TLE4 and TLE5. As to expression, expressed in the developing and adult retina. Also expressed in the hypothalamic and the pituitary regions.

It localises to the nucleus. May be involved in eye development. The sequence is that of Homeobox protein SIX6 (SIX6) from Homo sapiens (Human).